The following is a 371-amino-acid chain: Cytochrome b (371 aa).

4 consecutive transmembrane segments (helical) span residues phenylalanine 25 to valine 45, tryptophan 69 to isoleucine 90, tryptophan 105 to leucine 125, and phenylalanine 170 to isoleucine 190. Histidine 75 and histidine 89 together coordinate heme b. Heme b-binding residues include histidine 174 and histidine 188. A ubiquinone is bound at residue histidine 193. A run of 4 helical transmembrane segments spans residues histidine 218–phenylalanine 238, leucine 280–histidine 300, phenylalanine 312–threonine 332, and phenylalanine 339–proline 358.

This sequence belongs to the cytochrome b family. The cytochrome bc1 complex contains 3 respiratory subunits (MT-CYB, CYC1 and UQCRFS1), 2 core proteins (UQCRC1 and UQCRC2) and probably 6 low-molecular weight proteins. Heme b serves as cofactor.

The protein localises to the mitochondrion inner membrane. Its function is as follows. Component of the ubiquinol-cytochrome c reductase complex (complex III or cytochrome b-c1 complex) that is part of the mitochondrial respiratory chain. The b-c1 complex mediates electron transfer from ubiquinol to cytochrome c. Contributes to the generation of a proton gradient across the mitochondrial membrane that is then used for ATP synthesis. This Leiopython albertisii (Northern white-lipped python) protein is Cytochrome b (MT-CYB).